The sequence spans 520 residues: Keratin, type II cytoskeletal 72 (520 aa).

The head stretch occupies residues 1–133 (MSRQLTLYPG…DPEIQKVRAQ (133 aa)). The interval 134–169 (EREQIKALNNKFASFIDKVRFLEQQNQVLETKWELL) is coil 1A. Positions 134–447 (EREQIKALNN…KLLESEESRM (314 aa)) constitute an IF rod domain. The interval 170-188 (QQLDLNNSKRSLEPVHESY) is linker 1. A coil 1B region spans residues 189–280 (ISNLQKQLEI…VLFEGEIAQM (92 aa)). A linker 12 region spans residues 281 to 304 (QSHISDTSVILSMDNNRQLDLDSI). The coil 2 stretch occupies residues 305-443 (LAEVRAQYEE…ATYRKLLESE (139 aa)). Residues 444–520 (ESRMAGEYPN…SSGTTKKTSR (77 aa)) are tail. Positions 494–520 (KGSCGSELKDPPAKTSGSSGTTKKTSR) are disordered. Residues 507-520 (KTSGSSGTTKKTSR) show a composition bias toward low complexity.

The protein belongs to the intermediate filament family. Heterotetramer of two type I and two type II keratins.

Functionally, has a role in hair formation. Specific component of keratin intermediate filaments in the inner root sheath (IRS) of the hair follicle. The protein is Keratin, type II cytoskeletal 72 (Krt72) of Mus musculus (Mouse).